The following is a 344-amino-acid chain: N,N-dimethyltransferase OxyT (344 aa).

Residues Asp205 and 231-233 each bind S-adenosyl-L-methionine; that span reads GDF.

It belongs to the class I-like SAM-binding methyltransferase superfamily. Cation-independent O-methyltransferase family.

It catalyses the reaction 4-amino-4-dedimethylamino-anhydrotetracycline + S-adenosyl-L-methionine = 4-methylamino-4-dedimethylamino-anhydrotetracycline + S-adenosyl-L-homocysteine + H(+). It carries out the reaction 4-methylamino-4-dedimethylamino-anhydrotetracycline + S-adenosyl-L-methionine = anhydrotetracycline + S-adenosyl-L-homocysteine + H(+). It functions in the pathway antibiotic biosynthesis; oxytetracycline biosynthesis. Involved in the biosynthesis of the tetracycline antibiotic, oxytetracycline. Catalyzes the dimethylation of 4-amino-4-de(dimethylamino)anhydrotetracycline (4-amino-ATC) to yield anhydrotetracycline (ATC). Also able to catalyze the dimethylation of 7-chloro-, 6-demethyl-, 2-decarboxamido-2-nitrile-, and 4-methylamino-derivatives of 4-amino-4-de(dimethylamino)anhydrotetracycline. The protein is N,N-dimethyltransferase OxyT of Streptomyces rimosus.